The primary structure comprises 142 residues: Large ribosomal subunit protein uL13 (142 aa).

Belongs to the universal ribosomal protein uL13 family. Part of the 50S ribosomal subunit.

Its function is as follows. This protein is one of the early assembly proteins of the 50S ribosomal subunit, although it is not seen to bind rRNA by itself. It is important during the early stages of 50S assembly. This chain is Large ribosomal subunit protein uL13, found in Treponema pallidum (strain Nichols).